A 445-amino-acid chain; its full sequence is Phosphoglucosamine mutase (445 aa).

The active-site Phosphoserine intermediate is S99. Mg(2+)-binding residues include S99, D242, D244, and D246. S99 carries the phosphoserine modification.

The protein belongs to the phosphohexose mutase family. Mg(2+) serves as cofactor. Post-translationally, activated by phosphorylation.

The enzyme catalyses alpha-D-glucosamine 1-phosphate = D-glucosamine 6-phosphate. Catalyzes the conversion of glucosamine-6-phosphate to glucosamine-1-phosphate. The chain is Phosphoglucosamine mutase from Campylobacter jejuni subsp. jejuni serotype O:2 (strain ATCC 700819 / NCTC 11168).